Here is a 249-residue protein sequence, read N- to C-terminus: UPF0524 protein C3orf70 homolog B (249 aa).

The segment at 174-230 is disordered; it reads GPKMGHCSSPSTSEDSGINALGGHFLESCEEESEEEDELSTDGHSSPGSLWDQDECT. The segment covering 201-213 has biased composition (acidic residues); the sequence is SCEEESEEEDELS.

This sequence belongs to the UPF0524 family.

Its function is as follows. Plays a role in neuronal and neurobehavioral development. Required for normal expression of the postmitotic and mature neuron markers elavl3 and eno2 and neurobehaviors related to circadian rhythm and altered light-dark conditions. The protein is UPF0524 protein C3orf70 homolog B of Danio rerio (Zebrafish).